Here is a 45-residue protein sequence, read N- to C-terminus: Small polypeptide DEVIL 23 (45 aa).

The segment at 13 to 44 (KSTLRCWDWCKEQRTRAYIIWRCLIFLLRWDD) is required for DVL/RTFL small polypeptide activity. The helical transmembrane segment at 22-39 (CKEQRTRAYIIWRCLIFL) threads the bilayer.

Belongs to the DVL/RTFL small polypeptides family.

It is found in the cell membrane. Its function is as follows. Small polypeptide acting as a regulatory molecule which coordinates cellular responses required for differentiation, growth and development, probably by restricting polar cell proliferation in lateral organs and coordinating socket cell recruitment and differentiation at trichome sites. The sequence is that of Small polypeptide DEVIL 23 from Arabidopsis thaliana (Mouse-ear cress).